A 402-amino-acid chain; its full sequence is uncharacterized protein (402 aa).

This is an uncharacterized protein from Ostreid herpesvirus 1 (isolate France) (OsHV-1).